The following is a 460-amino-acid chain: Metal cation symporter ZIP8 (460 aa).

The first 22 residues, 1-22 (MAPGRAVAGLLLLAAAGLGGVA), serve as a signal peptide directing secretion. The Extracellular segment spans residues 23-132 (EGPGLAFSED…PSHSEVWGYG (110 aa)). N-linked (GlcNAc...) asparagine glycans are attached at residues Asn-40 and Asn-88. Residues 133–153 (FLSVTIINLASLLGLILTPLI) traverse the membrane as a helical segment. Residues 154–160 (KKSYFPK) lie on the Cytoplasmic side of the membrane. Residues 161–181 (ILTFFVGLAIGTLFSNAIFQL) form a helical membrane-spanning segment. The Extracellular segment spans residues 182-191 (IPEAFGFDPK). The helical transmembrane segment at 192–212 (VDSYVEKAVAVFGGFYLLFFF) threads the bilayer. Residues 213 to 365 (ERMLKMLLKT…LNAGMSTRQA (153 aa)) lie on the Cytoplasmic side of the membrane. An XEXPHE-motif motif is present at residues 343-348 (EEFPHE). Residues 366 to 386 (LLFNFLSACSCYVGLAFGILV) form a helical membrane-spanning segment. The Extracellular portion of the chain corresponds to 387–388 (GN). Residues 389 to 409 (NFAPNIIFALAGGMFLYISLA) form a helical membrane-spanning segment. Residues 410–429 (DMFPEMNDMLREKVTGRKTD) lie on the Cytoplasmic side of the membrane. A helical membrane pass occupies residues 430 to 450 (FTFFMIQNAGMLTGFTAILLI). Over 451–460 (TLYAGEIELE) the chain is Extracellular.

It belongs to the ZIP transporter (TC 2.A.5) family. Homodimer. In terms of processing, N-glycosylated. N-glycosylation is not required for proper iron and zinc transport. As to expression, ubiquitously expressed. Expressed in thymus, placenta, lung, liver, pancreas, salivary gland and, to a lower extent, in spleen, testis, ovary, small intestine, colon, leukocyte, heart. Highest expression is observed in pancreas. Expressed by macrophages (at protein level). Expressed by microvascular capillary endothelial cells that constitute the blood-brain barrier (at protein level).

Its subcellular location is the cell membrane. The protein localises to the lysosome membrane. It is found in the apical cell membrane. It localises to the basolateral cell membrane. It carries out the reaction Zn(2+)(out) + 2 hydrogencarbonate(out) = Zn(2+)(in) + 2 hydrogencarbonate(in). The enzyme catalyses selenite(out) + Zn(2+)(out) + hydrogencarbonate(out) = selenite(in) + Zn(2+)(in) + hydrogencarbonate(in). It catalyses the reaction Mn(2+)(out) + 2 hydrogencarbonate(out) = Mn(2+)(in) + 2 hydrogencarbonate(in). The catalysed reaction is Fe(2+)(out) + 2 hydrogencarbonate(out) = Fe(2+)(in) + 2 hydrogencarbonate(in). It carries out the reaction Cd(2+)(out) + 2 hydrogencarbonate(out) = Cd(2+)(in) + 2 hydrogencarbonate(in). The enzyme catalyses Co(2+)(out) + 2 hydrogencarbonate(out) = Co(2+)(in) + 2 hydrogencarbonate(in). Its function is as follows. Electroneutral divalent metal cation:bicarbonate symporter of the plasma membrane mediating the cellular uptake of zinc and manganese, two divalent metal cations important for development, tissue homeostasis and immunity. Transports an electroneutral complex composed of a divalent metal cation and two bicarbonate anions or alternatively a bicarbonate and a selenite anion. Thereby, it also contributes to the cellular uptake of selenium, an essential trace metal and micronutrient. Also imports cadmium a non-essential metal which is cytotoxic and carcinogenic. May also transport iron and cobalt through membranes. Through zinc import, indirectly regulates the metal-dependent transcription factor MTF1 and the expression of some metalloproteases involved in cartilage catabolism and also probably heart development. Also indirectly regulates the expression of proteins involved in cell morphology and cytoskeleton organization. Indirectly controls innate immune function and inflammatory response by regulating zinc cellular uptake which in turn modulates the expression of genes specific of these processes. Protects, for instance, cells from injury and death at the onset of inflammation. By regulating zinc influx into monocytes also directly modulates their adhesion to endothelial cells and arteries. Reclaims manganese from the bile at the apical membrane of hepatocytes, thereby regulating the activity of the manganese-dependent enzymes through the systemic levels of the nutrient. Also participates in manganese reabsorption in the proximal tubule of the kidney. By mediating the extracellular uptake of manganese by cells of the blood-brain barrier, may also play a role in the transport of the micronutrient to the brain. With manganese cellular uptake also participates in mitochondrial proper function. Finally, also probably functions intracellularly, translocating zinc from lysosome to cytosol to indirectly enhance the expression of specific genes during TCR-mediated T cell activation. This chain is Metal cation symporter ZIP8, found in Homo sapiens (Human).